Reading from the N-terminus, the 386-residue chain is Putative aminotransferase YugH (386 aa).

K234 is subject to N6-(pyridoxal phosphate)lysine.

Belongs to the class-I pyridoxal-phosphate-dependent aminotransferase family. The cofactor is pyridoxal 5'-phosphate.

The protein localises to the cytoplasm. This chain is Putative aminotransferase YugH (yugH), found in Bacillus subtilis (strain 168).